The following is a 419-amino-acid chain: GTPase Obg (419 aa).

In terms of domain architecture, Obg spans Met-1–Leu-158. The OBG-type G domain maps to Ala-159–Gln-324. GTP-binding positions include Gly-165 to Ser-172, Phe-190 to Lys-194, Asp-211 to Gly-214, Asn-278 to Asp-281, and Ser-305 to Val-307. Mg(2+) is bound by residues Ser-172 and Thr-192. Positions Thr-342–Leu-419 constitute an OCT domain.

Belongs to the TRAFAC class OBG-HflX-like GTPase superfamily. OBG GTPase family. In terms of assembly, monomer. It depends on Mg(2+) as a cofactor.

It localises to the cytoplasm. In terms of biological role, an essential GTPase which binds GTP, GDP and possibly (p)ppGpp with moderate affinity, with high nucleotide exchange rates and a fairly low GTP hydrolysis rate. Plays a role in control of the cell cycle, stress response, ribosome biogenesis and in those bacteria that undergo differentiation, in morphogenesis control. This chain is GTPase Obg, found in Aster yellows witches'-broom phytoplasma (strain AYWB).